The following is a 427-amino-acid chain: MSVKWEKQEGNEGVLTVTVPAEEVNAGLDKAFKKVVKQVNVPGFRKGKMPRPMFEQRFGVEALYQDALDFILPDAYAAAVEEAGINPVDRPEIDIEQMEKGKELIFTAKVTVEPEVELGDYKGLEVEKEDTEVTEEDLNKAIEADLARKAELVVKEEGEVAEGDVVNLDFDGYVNEEAFEGGKAEGYDLEIGSGQFIPGFEEQLVGTKVGDEKDVTVTFPEEYHAEELAGKEAVFKVKINEVKSKEVPELDDEMAKELDESVDSVDAYKEKYKKDLQEQKTLQAENNMKESLIAQAVENAKVDIPEAMINTELDRMMQEFEQRIAQQGLNLELYYQFSGQTEEQLKESMKADAEARVKTNLTLAAIAKAENIEISDTDVDAELSKMSEQFGLSVDDIKAALGNGEVLKDDLRIQKAIDVLVKESKEK.

Positions 163 to 248 (GDVVNLDFDG…INEVKSKEVP (86 aa)) constitute a PPIase FKBP-type domain.

This sequence belongs to the FKBP-type PPIase family. Tig subfamily.

It is found in the cytoplasm. It catalyses the reaction [protein]-peptidylproline (omega=180) = [protein]-peptidylproline (omega=0). Involved in protein export. Acts as a chaperone by maintaining the newly synthesized protein in an open conformation. Functions as a peptidyl-prolyl cis-trans isomerase. The chain is Trigger factor from Macrococcus caseolyticus (strain JCSC5402) (Macrococcoides caseolyticum).